The following is an 859-amino-acid chain: Probable helicase A859L (859 aa).

Residues 178–349 enclose the Helicase ATP-binding domain; that stretch reads YQELRRSGRA…KNRELFGGVA (172 aa). An ATP-binding site is contributed by 191 to 198; that stretch reads MACRCGKT. The short motif at 298-301 is the DEAH box element; that stretch reads DECH. In terms of domain architecture, Helicase C-terminal spans 394–553; that stretch reads QIIMALAYLK…RFYEHLLNPS (160 aa).

It belongs to the asfivirus helicase A859L family.

The chain is Probable helicase A859L from Ornithodoros (relapsing fever ticks).